Here is a 154-residue protein sequence, read N- to C-terminus: Putative hydrogenase maturation protease MJ0253 (154 aa).

It belongs to the peptidase A31 family.

This Methanocaldococcus jannaschii (strain ATCC 43067 / DSM 2661 / JAL-1 / JCM 10045 / NBRC 100440) (Methanococcus jannaschii) protein is Putative hydrogenase maturation protease MJ0253.